A 123-amino-acid polypeptide reads, in one-letter code: Putative iron-sulfur cluster insertion protein ErpA (123 aa).

Positions 51, 115, and 117 each coordinate iron-sulfur cluster.

This sequence belongs to the HesB/IscA family. In terms of assembly, homodimer. Iron-sulfur cluster is required as a cofactor.

Functionally, required for insertion of 4Fe-4S clusters. The polypeptide is Putative iron-sulfur cluster insertion protein ErpA (Burkholderia multivorans (strain ATCC 17616 / 249)).